A 451-amino-acid polypeptide reads, in one-letter code: MTENEQIFWNRVLELAQSQLKQATYEFFVHDARLLKVDKHIATIYLDQMKELFWEKNLKDVILTAGFEVYNAQISVDYVFEEDLMIEQNQTKINQKPKQQALNSLPTVTSDLNSKYSFENFIQGDENRWAVAASIAVANTPGTTYNPLFIWGGPGLGKTHLLNAIGNSVLLENPNARIKYITAENFINEFVIHIRLDTMDELKEKFRNLDLLLIDDIQSLAKKTLSGTQEEFFNTFNALHNNNKQIVLTSDRTPDHLNDLEDRLVTRFKWGLTVNITPPDFETRVAILTNKIQEYNFIFPQDTIEYLAGQFDSNVRDLEGALKDISLVANFKQIDTITVDIAAEAIRARKQDGPKMTVIPIEEIQAQVGKFYGVTVKEIKATKRTQNIVLARQVAMFLAREMTDNSLPKIGKEFGGRDHSTVLHAYNKIKNMISQDESLRIEIETIKNKIK.

Residues 1-77 (MTENEQIFWN…EVYNAQISVD (77 aa)) are domain I, interacts with DnaA modulators. The segment at 77 to 110 (DYVFEEDLMIEQNQTKINQKPKQQALNSLPTVTS) is domain II. Residues 111–329 (DLNSKYSFEN…GALKDISLVA (219 aa)) form a domain III, AAA+ region region. Positions 155, 157, 158, and 159 each coordinate ATP. The segment at 330-451 (NFKQIDTITV…EIETIKNKIK (122 aa)) is domain IV, binds dsDNA.

The protein belongs to the DnaA family. As to quaternary structure, oligomerizes as a right-handed, spiral filament on DNA at oriC.

The protein resides in the cytoplasm. In terms of biological role, plays an essential role in the initiation and regulation of chromosomal replication. ATP-DnaA binds to the origin of replication (oriC) to initiate formation of the DNA replication initiation complex once per cell cycle. Binds the DnaA box (a 9 base pair repeat at the origin) and separates the double-stranded (ds)DNA. Forms a right-handed helical filament on oriC DNA; dsDNA binds to the exterior of the filament while single-stranded (ss)DNA is stabiized in the filament's interior. The ATP-DnaA-oriC complex binds and stabilizes one strand of the AT-rich DNA unwinding element (DUE), permitting loading of DNA polymerase. After initiation quickly degrades to an ADP-DnaA complex that is not apt for DNA replication. Binds acidic phospholipids. The half-life of ATP-DnaA is 12 minutes at 37 degrees Celsius, in E.coli the half-life is about 41 minutes. The polypeptide is Chromosomal replication initiator protein DnaA (Streptococcus pyogenes serotype M1).